We begin with the raw amino-acid sequence, 194 residues long: Imidazoleglycerol-phosphate dehydratase (194 aa).

The protein belongs to the imidazoleglycerol-phosphate dehydratase family.

The protein resides in the cytoplasm. It catalyses the reaction D-erythro-1-(imidazol-4-yl)glycerol 3-phosphate = 3-(imidazol-4-yl)-2-oxopropyl phosphate + H2O. Its pathway is amino-acid biosynthesis; L-histidine biosynthesis; L-histidine from 5-phospho-alpha-D-ribose 1-diphosphate: step 6/9. The sequence is that of Imidazoleglycerol-phosphate dehydratase from Chloroherpeton thalassium (strain ATCC 35110 / GB-78).